The primary structure comprises 350 residues: Putative zinc metalloprotease jhp_0242 (350 aa).

Histidine 16 contributes to the Zn(2+) binding site. Glutamate 17 is an active-site residue. A Zn(2+)-binding site is contributed by histidine 20. The next 5 membrane-spanning stretches (helical) occupy residues 43 to 63 (WFFK…GGYV), 94 to 114 (LWIL…VYFF), 249 to 269 (LIMG…VGAL), 277 to 297 (MLLL…LLPI), and 326 to 346 (LWLV…FNDI). In terms of domain architecture, PDZ spans 108–177 (AVLVYFFLAL…GELILEIERN (70 aa)).

It belongs to the peptidase M50B family. It depends on Zn(2+) as a cofactor.

The protein resides in the cell inner membrane. This is Putative zinc metalloprotease jhp_0242 from Helicobacter pylori (strain J99 / ATCC 700824) (Campylobacter pylori J99).